The sequence spans 791 residues: Pleckstrin homology domain-containing family H member 3 (791 aa).

The first 18 residues, 1–18, serve as a signal peptide directing secretion; the sequence is MPLPGGLWWLLCCRRGFT. Over residues 29–41 the composition is skewed to acidic residues; that stretch reads LSGDGDEDEDDET. The segment at 29–71 is disordered; it reads LSGDGDEDEDDETFELRSPSPAGGGRGSLDVTLTQPTRNGPIT. S30 carries the post-translational modification Phosphoserine. Positions 59–71 are enriched in polar residues; it reads VTLTQPTRNGPIT. The PH domain maps to 95-199; it reads DVIVKGWLYR…WGVALREVIA (105 aa). Positions 237–399 constitute a MyTH4 domain; it reads HTSSALYAPL…PSLAEISALS (163 aa). In terms of domain architecture, FERM spans 404–755; sequence LLCTVHCPGA…ANPSPERPCS (352 aa). Residues 549–559 show a composition bias toward low complexity; the sequence is PRGPLPLLDRL. Disordered regions lie at residues 549 to 580 and 593 to 623; these read PRGP…PPPS and LAKR…GGGS. Basic residues predominate over residues 594–605; sequence AKRRAERARRIG. The residue at position 636 (R636) is an Omega-N-methylarginine. The interval 748–791 is disordered; that stretch reads PSPERPCSSSGPPSQDLSDTSPPSQHQVLEKPQGQSGCLRQLQD. The segment covering 754-791 has biased composition (polar residues); sequence CSSSGPPSQDLSDTSPPSQHQVLEKPQGQSGCLRQLQD.

In Rattus norvegicus (Rat), this protein is Pleckstrin homology domain-containing family H member 3 (Plekhh3).